The primary structure comprises 240 residues: Uridylate kinase (240 aa).

13 to 16 serves as a coordination point for ATP; the sequence is KASG. Residues 21 to 26 form an involved in allosteric activation by GTP region; the sequence is GSQGFG. Residue glycine 55 coordinates UMP. Positions 56 and 60 each coordinate ATP. Residues aspartate 75 and 136–143 contribute to the UMP site; that span reads TGNPFFTT. Residues threonine 163, glutamine 164, tyrosine 169, and aspartate 172 each coordinate ATP.

The protein belongs to the UMP kinase family. As to quaternary structure, homohexamer.

It is found in the cytoplasm. The catalysed reaction is UMP + ATP = UDP + ADP. Its pathway is pyrimidine metabolism; CTP biosynthesis via de novo pathway; UDP from UMP (UMPK route): step 1/1. Allosterically activated by GTP. Inhibited by UTP. Catalyzes the reversible phosphorylation of UMP to UDP. The protein is Uridylate kinase of Rhizobium meliloti (strain 1021) (Ensifer meliloti).